The following is an 884-amino-acid chain: Lon protease homolog 2, peroxisomal (884 aa).

The Lon N-terminal domain occupies 12-255 (LAILPFRNKV…KATELVDRHL (244 aa)). Positions 67 to 101 (SLLSPGVGSDSGEGGSKAPGGSAGESTKQDTKNGK) are disordered. Residues 75 to 89 (SDSGEGGSKAPGGSA) are compositionally biased toward gly residues. Position 408–415 (408–415 (GPPGVGKT)) interacts with ATP. Residues 689–874 (VASPGVSVGL…EEVLDHAFEG (186 aa)) enclose the Lon proteolytic domain. Residues Ser780 and Lys823 contribute to the active site. The Microbody targeting signal motif lies at 882–884 (SKL).

It belongs to the peptidase S16 family.

The protein resides in the peroxisome matrix. It carries out the reaction Hydrolysis of proteins in presence of ATP.. Functionally, ATP-dependent serine protease that mediates the selective degradation of misfolded and unassembled polypeptides in the peroxisomal matrix. Necessary for type 2 peroxisome targeting signal (PTS2)-containing protein processing and facilitates peroxisome matrix protein import. This Oryza sativa subsp. japonica (Rice) protein is Lon protease homolog 2, peroxisomal.